We begin with the raw amino-acid sequence, 173 residues long: Mesencephalic astrocyte-derived neurotrophic factor homolog (173 aa).

Residues 1-22 form the signal peptide; it reads MKTWYMVVVIGFLATLVQTSLA. 4 disulfide bridges follow: Cys28-Cys114, Cys31-Cys103, Cys61-Cys72, and Cys148-Cys151.

The protein belongs to the ARMET family.

The protein resides in the secreted. Functionally, required during the maturation of the embryonic nervous system for maintenance of neuronal and cuticular connectivity. Essential for maintenance of dopaminergic neurons and dopamine levels. This chain is Mesencephalic astrocyte-derived neurotrophic factor homolog, found in Drosophila yakuba (Fruit fly).